Consider the following 354-residue polypeptide: 3-dehydroquinate synthase (354 aa).

Residues 100–104, 124–125, K136, K145, and 163–166 contribute to the NAD(+) site; these read GATGD, TT, and FLKT. Zn(2+) contacts are provided by E178, H242, and H256.

Belongs to the sugar phosphate cyclases superfamily. Dehydroquinate synthase family. NAD(+) serves as cofactor. Requires Co(2+) as cofactor. It depends on Zn(2+) as a cofactor.

The protein localises to the cytoplasm. It catalyses the reaction 7-phospho-2-dehydro-3-deoxy-D-arabino-heptonate = 3-dehydroquinate + phosphate. The protein operates within metabolic intermediate biosynthesis; chorismate biosynthesis; chorismate from D-erythrose 4-phosphate and phosphoenolpyruvate: step 2/7. In terms of biological role, catalyzes the conversion of 3-deoxy-D-arabino-heptulosonate 7-phosphate (DAHP) to dehydroquinate (DHQ). This is 3-dehydroquinate synthase from Staphylococcus aureus (strain Mu50 / ATCC 700699).